Consider the following 34-residue polypeptide: Beta/mu-theraphotoxin-Pe1b (34 aa).

Disulfide bonds link cysteine 2–cysteine 16, cysteine 9–cysteine 21, and cysteine 15–cysteine 28.

It belongs to the neurotoxin 10 (Hwtx-1) family. 54 (ProTx-1) subfamily. In terms of tissue distribution, expressed by the venom gland.

It is found in the secreted. In terms of biological role, ion channel impairing toxin that inhibits several voltage-gated sodium channels. It acts by inhibiting the inward component of the sodium current and by shifting the voltage dependence of channel activation to more depolarized potentials. Its most potent activity is on Nav1.7/SCN9A (IC(50)=167 nM), followed by Nav1.6/SCN8A (IC(50)=696 nM), and Nav1.2/SCN2A (IC(50)=3.54 uM). This is Beta/mu-theraphotoxin-Pe1b from Phormingochilus everetti (Malaysian purple earth tiger tarantula).